The chain runs to 481 residues: Drebrin-like protein (481 aa).

Residues Ser3–Asn131 enclose the ADF-H domain. Residues Tyr217 to Lys227 show a composition bias toward basic and acidic residues. The disordered stretch occupies residues Tyr217–Gly423. Positions Gln228–Ala237 are enriched in low complexity. Polar residues predominate over residues Thr248–Thr261. The span at Pro291–Pro300 shows a compositional bias: pro residues. Residues Gln325–Gln335 are compositionally biased toward acidic residues. Positions Gln336–Gln413 are enriched in low complexity. Positions Ser422 to Leu481 constitute an SH3 domain.

This sequence belongs to the ABP1 family.

It is found in the cytoplasm. Its subcellular location is the cytoskeleton. The protein resides in the cell projection. It localises to the pseudopodium. Functionally, actin-binding adapter protein. Binds to F-actin but is not involved in actin polymerization, capping or bundling. Does not bind G-actin. Controls pseudopodium number and motility in early stages of chemotactic aggregation. This is Drebrin-like protein (abpE-1) from Dictyostelium discoideum (Social amoeba).